A 337-amino-acid chain; its full sequence is 2-oxoglutarate-dependent dioxygenase frbA (337 aa).

A Fe2OG dioxygenase domain is found at 175-290 (CSAELRLNHY…RHSLAYFGKP (116 aa)). Positions 202, 204, and 262 each coordinate Fe cation. R281 contributes to the 2-oxoglutarate binding site.

This sequence belongs to the iron/ascorbate-dependent oxidoreductase family. It depends on Fe(2+) as a cofactor.

It participates in antifungal biosynthesis. In terms of biological role, 2-oxoglutarate-dependent dioxygenase; part of the gene cluster that mediates the biosynthesis of the antifungal antibiotic FR901469, an inhibitor of beta-1,3-glucansynthase, exerting antifungal activity against the pathogenes Candida albicans and Aspergillus fumigatus. FR901469 is a cyclic depsipeptide containing 12 amino acid residues and a fatty acid chain. The NRPS frbI contains 12 modules responsible for the formation of the depsipeptide backbone which is denoted as Acyl-Thr-Ala-Tyr-Val-4OHPro-Thr-Thr-3OHPro-threo3OHGln-Gly-Thr-Orn-OH (C71H116N14O23). The PKS frbB is probably involved in the production of the hydrocarbon chain, and the acyl-CoA ligase frbC might be involved in the transport of the chain to the peptide ptoduct of frbI. Because FR901469 contains 3 hydroxylated amino acid residues, the 3 oxygenases frbA, frbH, and frbJ might be participating in amino acid hydroxylation. As no thioesterase domains were detected in frbI or frbB, the thioesterases frbD and frbE may instead release and cyclize the products of the NRPS and PKS, respectively. The chain is 2-oxoglutarate-dependent dioxygenase frbA from Dothideomycetidae sp. (strain 11243) (Fungal sp. (strain No.11243)).